A 227-amino-acid polypeptide reads, in one-letter code: PKHD-type hydroxylase BamMC406_4714 (227 aa).

A Fe2OG dioxygenase domain is found at 78 to 178; sequence KVFPPLFNRY…RVASFFWIQS (101 aa). The Fe cation site is built by His96, Asp98, and His159. Arg169 serves as a coordination point for 2-oxoglutarate.

Requires Fe(2+) as cofactor. L-ascorbate is required as a cofactor.

The sequence is that of PKHD-type hydroxylase BamMC406_4714 from Burkholderia ambifaria (strain MC40-6).